Here is a 140-residue protein sequence, read N- to C-terminus: Putative pre-16S rRNA nuclease (140 aa).

This sequence belongs to the YqgF nuclease family.

Its subcellular location is the cytoplasm. Its function is as follows. Could be a nuclease involved in processing of the 5'-end of pre-16S rRNA. The protein is Putative pre-16S rRNA nuclease of Mycoplasma pneumoniae (strain ATCC 29342 / M129 / Subtype 1) (Mycoplasmoides pneumoniae).